An 892-amino-acid polypeptide reads, in one-letter code: Alanine--tRNA ligase (892 aa).

Residues His-574, His-578, Cys-676, and His-680 each contribute to the Zn(2+) site.

The protein belongs to the class-II aminoacyl-tRNA synthetase family. It depends on Zn(2+) as a cofactor.

It is found in the cytoplasm. It catalyses the reaction tRNA(Ala) + L-alanine + ATP = L-alanyl-tRNA(Ala) + AMP + diphosphate. In terms of biological role, catalyzes the attachment of alanine to tRNA(Ala) in a two-step reaction: alanine is first activated by ATP to form Ala-AMP and then transferred to the acceptor end of tRNA(Ala). Also edits incorrectly charged Ser-tRNA(Ala) and Gly-tRNA(Ala) via its editing domain. This is Alanine--tRNA ligase from Prochlorococcus marinus (strain SARG / CCMP1375 / SS120).